The primary structure comprises 403 residues: MTIAPMANDLEDFESLLEPDFDAKQFGNDLLKATNNNDTTILDLNTPLKKLNYDLHEIDSRIDQLMNSNPLEIIELIYKNEHVNSTIVGELKPSLGYMNMSYDRLKNQVLDPYERARKVQLALSKVYQTSFLLRGALLYIHLSNKLNALSKTAQLSTSTAINLASLHYQLEITLEENKNLKSLRKIKQLDQDIVSPNKRELITFLSLQMCKECLNSIKIKSNKEIISQLAYSLYLLSSQEFESAINKIVLSNVTMSSQILSKILNSIRMFPDAFNEVVEKGYNIYILETLLQNIKTDNVTNSSRSIAANKSRLGNLLSEYTSMKSKAGSGTPRDLFWSKVSSAFKKDFDISVNRGGPVGKSLLKNKDFIINTMKQSMKKSSDNSDYQSYLDVMLNSVSISLNK.

This sequence belongs to the COG5 family. Component of the conserved oligomeric Golgi (COG or Sec34/Sec35) complex which consists of eight different proteins COG1-COG8.

Its subcellular location is the golgi apparatus membrane. Acts as a component of the peripheral membrane COG complex that is involved in intra-Golgi protein trafficking. COG is located at the cis-Golgi, and regulates tethering of retrograde intra-Golgi vesicles and possibly a number of other membrane trafficking events. This is Conserved oligomeric Golgi complex subunit 5 (COG5) from Saccharomyces cerevisiae (strain ATCC 204508 / S288c) (Baker's yeast).